A 185-amino-acid polypeptide reads, in one-letter code: Superoxide dismutase [Cu-Zn] (185 aa).

Positions 1–18 are cleaved as a signal peptide; it reads MTAFYKLCGMSMLSLVLA. Residues His85, His87, and His102 each coordinate Cu cation. Cys92 and Cys180 are disulfide-bonded. His102, His111, His120, and Asp123 together coordinate Zn(2+). Residue His158 participates in Cu cation binding.

This sequence belongs to the Cu-Zn superoxide dismutase family. Homodimer. The cofactor is Cu cation. Zn(2+) serves as cofactor.

It is found in the periplasm. It catalyses the reaction 2 superoxide + 2 H(+) = H2O2 + O2. In terms of biological role, destroys radicals which are normally produced within the cells and which are toxic to biological systems. In Francisella tularensis subsp. holarctica (strain LVS), this protein is Superoxide dismutase [Cu-Zn] (sodC).